The sequence spans 418 residues: Enolase (418 aa).

(2R)-2-phosphoglycerate is bound at residue Gln162. The Proton donor role is filled by Glu204. 3 residues coordinate Mg(2+): Asp241, Glu283, and Asp309. (2R)-2-phosphoglycerate contacts are provided by Lys334, Arg363, Ser364, and Lys385. Lys334 functions as the Proton acceptor in the catalytic mechanism.

It belongs to the enolase family. It depends on Mg(2+) as a cofactor.

Its subcellular location is the cytoplasm. It localises to the secreted. The protein resides in the cell surface. It carries out the reaction (2R)-2-phosphoglycerate = phosphoenolpyruvate + H2O. The protein operates within carbohydrate degradation; glycolysis; pyruvate from D-glyceraldehyde 3-phosphate: step 4/5. In terms of biological role, catalyzes the reversible conversion of 2-phosphoglycerate (2-PG) into phosphoenolpyruvate (PEP). It is essential for the degradation of carbohydrates via glycolysis. This chain is Enolase, found in Pelagibacter ubique (strain HTCC1062).